A 115-amino-acid chain; its full sequence is Large ribosomal subunit protein bL19 (115 aa).

The protein belongs to the bacterial ribosomal protein bL19 family.

Its function is as follows. This protein is located at the 30S-50S ribosomal subunit interface and may play a role in the structure and function of the aminoacyl-tRNA binding site. The chain is Large ribosomal subunit protein bL19 from Streptococcus pneumoniae (strain JJA).